The following is a 228-amino-acid chain: ATP-dependent dethiobiotin synthetase BioD (228 aa).

13–18 is an ATP binding site; it reads DVGKTV. Residue threonine 17 coordinates Mg(2+). The active site involves lysine 38. Residues aspartate 55, 116 to 119, 176 to 177, and 205 to 207 contribute to the ATP site; these read EGAG, NR, and PYI. Mg(2+)-binding residues include aspartate 55 and glutamate 116.

It belongs to the dethiobiotin synthetase family. As to quaternary structure, homodimer. The cofactor is Mg(2+).

Its subcellular location is the cytoplasm. The catalysed reaction is (7R,8S)-7,8-diammoniononanoate + CO2 + ATP = (4R,5S)-dethiobiotin + ADP + phosphate + 3 H(+). Its pathway is cofactor biosynthesis; biotin biosynthesis; biotin from 7,8-diaminononanoate: step 1/2. Catalyzes a mechanistically unusual reaction, the ATP-dependent insertion of CO2 between the N7 and N8 nitrogen atoms of 7,8-diaminopelargonic acid (DAPA, also called 7,8-diammoniononanoate) to form a ureido ring. This Vibrio parahaemolyticus serotype O3:K6 (strain RIMD 2210633) protein is ATP-dependent dethiobiotin synthetase BioD.